The chain runs to 713 residues: Nucleoporin NUP82 (713 aa).

The interval 1 to 409 (MSQSSRLSAL…SDLNPLAGLK (409 aa)) is interaction with NUP116. Residues 463–713 (TSISTEKSDT…VSQEFTTKTQ (251 aa)) form an interaction with NSP1 and NUP159 region. The stretch at 582 to 713 (EAQNKKWDAQ…VSQEFTTKTQ (132 aa)) forms a coiled coil. The Bipartite nuclear localization signal motif lies at 607–623 (KKLSQIAESNKFKEKKI).

As to quaternary structure, component of the nuclear pore complex (NPC). NPC constitutes the exclusive means of nucleocytoplasmic transport. NPCs allow the passive diffusion of ions and small molecules and the active, nuclear transport receptor-mediated bidirectional transport of macromolecules such as proteins, RNAs, ribonucleoparticles (RNPs), and ribosomal subunits across the nuclear envelope. Due to its 8-fold rotational symmetry, all subunits are present with 8 copies or multiples thereof. NUP82 is part of the NUP82 subcomplex. This subcomplex is the base for interactions with NUP116 and GLE2, with NUP42 and GLE1 and with DYN2.

Its subcellular location is the nucleus. The protein resides in the nuclear pore complex. It is found in the nucleus membrane. In terms of biological role, functions as a component of the nuclear pore complex (NPC). NPC components, collectively referred to as nucleoporins (NUPs), can play the role of both NPC structural components and of docking or interaction partners for transiently associated nuclear transport factors. It is specifically involved as part of the NUP82-NUP159-NSP1 subcomplex in nuclear mRNA and pre-ribosome export by acting as a linker tethering nucleoporins that are directly involved in nuclear transport to the NPC via its coiled-coil domain. The sequence is that of Nucleoporin NUP82 (NUP82) from Saccharomyces cerevisiae (strain ATCC 204508 / S288c) (Baker's yeast).